Here is a 197-residue protein sequence, read N- to C-terminus: 3-isopropylmalate dehydratase small subunit (197 aa).

This sequence belongs to the LeuD family. LeuD type 1 subfamily. As to quaternary structure, heterodimer of LeuC and LeuD.

The catalysed reaction is (2R,3S)-3-isopropylmalate = (2S)-2-isopropylmalate. The protein operates within amino-acid biosynthesis; L-leucine biosynthesis; L-leucine from 3-methyl-2-oxobutanoate: step 2/4. Its function is as follows. Catalyzes the isomerization between 2-isopropylmalate and 3-isopropylmalate, via the formation of 2-isopropylmaleate. The polypeptide is 3-isopropylmalate dehydratase small subunit (Streptomyces avermitilis (strain ATCC 31267 / DSM 46492 / JCM 5070 / NBRC 14893 / NCIMB 12804 / NRRL 8165 / MA-4680)).